A 355-amino-acid chain; its full sequence is G protein alpha i subunit (355 aa).

A lipid anchor (N-myristoyl glycine) is attached at G2. The S-palmitoyl cysteine moiety is linked to residue C3. Positions 33 to 355 (SEVKLLLLGA…KNNLKQIGLF (323 aa)) constitute a G-alpha domain. The G1 motif stretch occupies residues 36–49 (KLLLLGAGESGKST). Residues 41–48 (GAGESGKS), 176–182 (LRTRVKT), 201–205 (DVGGQ), 270–273 (NKKD), and A327 each bind GTP. S48 and T182 together coordinate Mg(2+). The segment at 174 to 182 (DVLRTRVKT) is G2 motif. The G3 motif stretch occupies residues 197 to 206 (FKLFDVGGQR). Residues 266–273 (ILFLNKKD) are G4 motif. The interval 325–330 (TCATDT) is G5 motif.

It belongs to the G-alpha family. G(i/o/t/z) subfamily. In terms of assembly, g proteins are composed of 3 units; alpha, beta and gamma. The alpha chain contains the guanine nucleotide binding site. Interacts (via GDP- or GTP-bound forms) with loco (via GoLoco and RGS domains). Interacts with raps/pins.

It localises to the cell membrane. The protein resides in the apical cell membrane. Its function is as follows. Guanine nucleotide-binding proteins (G proteins) are involved as modulators or transducers in various transmembrane signaling systems. Plays a role in glial cell differentiation during embryogenesis; loco, Galphao and the G-protein coupled receptor, moody, are required in the surface glia to achieve effective insulation of the nerve cord. The sequence is that of G protein alpha i subunit (Galphai) from Drosophila melanogaster (Fruit fly).